A 544-amino-acid chain; its full sequence is Chaperonin GroEL (544 aa).

Residues 30 to 33, 87 to 91, G414, 478 to 480, and D494 each bind ATP; these read TLGP, DGTTT, and NAL.

The protein belongs to the chaperonin (HSP60) family. In terms of assembly, forms a cylinder of 14 subunits composed of two heptameric rings stacked back-to-back. Interacts with the co-chaperonin GroES.

It is found in the cytoplasm. The catalysed reaction is ATP + H2O + a folded polypeptide = ADP + phosphate + an unfolded polypeptide.. Functionally, together with its co-chaperonin GroES, plays an essential role in assisting protein folding. The GroEL-GroES system forms a nano-cage that allows encapsulation of the non-native substrate proteins and provides a physical environment optimized to promote and accelerate protein folding. This chain is Chaperonin GroEL, found in Pelotomaculum thermopropionicum (strain DSM 13744 / JCM 10971 / SI).